The chain runs to 2646 residues: MSTCCWCTPGGSSTIDVLKRYASSTGSSEFQTADEDLCYCLECVAEYHRARDEVPFLHEVLWELETLRLVSHFEKSMKAEAEDDDDLYIVDNNGEEQLFDCSGQDFENKLRVPLFEILKYPYLLLHERVNELCVEALCRMEQNNCSFQVFDKYPGIYLFLVHPNEMVRRWAILTARNLGKVDRDDYYDLQEVLTCLFKVIELGLLESPDIYTSSVLEKGKLILLPAHMYDTTNYKNYWLGICMLLTILEEQAMDSLLLGSDKQNDFMQSILHTMEKQSDDDSMDPFWPALHCFMVILDRLGSKVWGQLIDPIEAFQTIINNESYNREIQNIRNSSIRTKLEPEPHFDDMVTCSQIVYNFNPEKTKKDSGWRSAICPDYCPNMYEEMETLANVLQSDIGQDMRVHNSTFLWFIPFVQSLMDLKDLGVAYIVEVIHHLYSEVKDVLNQTDAVCDKVTEFFILILISVIELHRNKKCLHLLWVSSQQWVEAVVKCAKLPTTAFVRSCEKSPGSTSRGAAIMSSLALHSVQSNSVQLACVQLIRGLLKEGYQLGQQTLCKRFWDKLNLFLRGNLSLGWQLTGQETHELQMCLKQIIRNIKFKMPQYSTFGDSTSTFKTPPSFKEESDKIDRKHKKNIYCLENCSPVSSKEPMKADTHRVLMKVNTTEEENFKQHYIDLNEEEQEPLPAELCLKQKSEALFSESAQEQVKISAEKSGKESSSYAPSNSTSRNGPEWGCDRGVIMSAHSLTDSSSDFMEQVSTSNEDVSLKDGSVGKTSKPSFKLQKDEICAKLSHVIKKQIRKSTLVDNIIDLEENTAISDLENCSGTDGGALKEDSIGHNVPSDPVLDDKHEEQKSQNSSLFKKEIKSEELDNSSSDDEDKLQIQEGRADDDLVSFTEVTDTLVKAPCEGHVKMVVESRDKEMRESTALTSNLVEGQVPHDSSKPLVAGRQIDLCNITLISQTTVIQFPSGLSKQNSFQLQKGDKRCLTANQNSAATCRGQVIVISDSDEEEDEDEDERSSSEENIKQSKACIGKDCSEHRSLAVNASVEKQLVKEEERYPVEFEDSESQVFEFESSSEVFSVWQDHKIDSKNSLQGEQKSYVTHVADSTNNNLGCGDSVSEEVVRNKAEGVKEHAGPHSSVSAEEFCKTGVKKPKRKRYDKVTAEDPQRPSSSVGTDQLPDRRDLTESDLKSADMGMATPSSSVERDSTILQKSTKSRTHSKPVRKVPASKATKKTHSDTRRGQSKSSCYISCRTSPAIVPPKKLRQCPEPTSTVEKLGLKKAPRKAFELSQRSLECIVQLRDHGKTVGVVDAPKKAKLISPQTLSIKNNKKLLTSQDLQFQRLMRSRSHKKRDFDYKNTDTVRVSRIVQGSDVLEADSDEPDDHRVSEPLAISNEKQLAKCMLSKTEVAEASSDPWVTGITCLVNQCESRVLSGGVPTDVVMVSASEDPVDGGAVTVQVGEVASVKAAEPASSSDTDDDDNLFLTQHDPQDMDLCSQLENKTIIVAHKKDTVQREDSLSRPQLESLSITKCKYKDCVETTKNQGEYCPRHSEAKAADDGLFRKPGLPLSVARPLRPTTTKIFSSSSASRTANLSKSLESTTLQQSALKNKSSGAQPNLKVTPPSSMGSQKPVAEVKSLCNIFHFQTPSSSSKQSCKLTFSENRPTSAASPVNILLPSQSIFDTFIKEVLKWKYQMFLNFDKCGAPTSLCQSISRPVPVRFQDCAEYFNVFLPLIILNAFETVAQEWLSSPNKENFYQLQLRKFPADYKKYWEFLIYLNESELAKQLHPKENDLVFLAPEKSYMDRHGMQDCSHYYCGYVHKFRRTSVMRSGKAECSLCIQTQDTLPASVKNLTRCIVISSLVTTQRKLKAMSLLSSRNQLARAVLNPNPMDFCTKDLLTTTSERIVAYLKDFNEDQKKAIETAYAMVKHSPSVAKICLIHGPPGTGKSKTIVGLLYRLLTENQRKGHSDENFNAKIKQNRVLVCAPSNAAVDELMKKIILEFKEKCKDKKNPLGNCGDINLVRLGPEKSINTEVLKFSLDSQVNHRMKKDLPSHIQEMLRRKEILDAQLDELSRQRALCRGGREMQRQELDEHIAIVSKERQELASKIKEVQGRPQRAQNTIILESHVICCTLSTSGGLLLESAFRGQGGVPFSCVIVDEAGQSCEVETLSPLIHRCNKLILVGDPKQLPPTVISMKAQEYGYDQSMMARFCKLLEENVEQNMIGRLPVLQLTIQYRMHPDICLFPSNYVYNKNLKTNRLTESIRCSSEWPFQPYLVFDVGDGSERRDNDSYINVQEIKLVMEIIKLIKEKRKDISFRNIGIITHYKAQKTMIQKDLEKEFDKKGPAEVDTVDAFQGRQKDCIIVTCVRASAVQGSIGFLASLQRLNVTITRAKYSLFILGHLRTLMENQHWYELIQDAQKRGAIIKTSDPNYRHDAMKILKLKPVLQRSLTHPPATAPEAPRPQGGLPSNRLDSGLATTSFAASLYHTPSDTVTSKGPERPLLQDRLRDPRLLRRLDAEAKGTFLKDPQPVSPQLPGVVHLLGEPGFPVVFQDLGFVVPPSTAIVAPLGSHRSPMQAEPPPAHPAAAASTSKRKYSDPDAGLSHKREPRAFSGEQGRHGSVTHHVLRSTDWDRRRLDDSSAKRRQFL.

Phosphoserine is present on serine 102. Lysine 339 participates in a covalent cross-link: Glycyl lysine isopeptide (Lys-Gly) (interchain with G-Cter in SUMO1). Serine 640 is modified (phosphoserine). 2 disordered regions span residues 705-734 (KISAEKSGKESSSYAPSNSTSRNGPEWGCD) and 825-876 (GGAL…DDED). Polar residues predominate over residues 714 to 727 (ESSSYAPSNSTSRN). Acidic residues predominate over residues 867–876 (LDNSSSDDED). Serine 870, serine 871, serine 872, serine 938, serine 1002, and serine 1004 each carry phosphoserine. Residues 1001 to 1023 (ISDSDEEEDEDEDERSSSEENIK) form a disordered region. Positions 1003 to 1014 (DSDEEEDEDEDE) are enriched in acidic residues. A Glycyl lysine isopeptide (Lys-Gly) (interchain with G-Cter in SUMO2) cross-link involves residue lysine 1051. Residues 1122-1133 (RNKAEGVKEHAG) are compositionally biased toward basic and acidic residues. Residues 1122-1245 (RNKAEGVKEH…DTRRGQSKSS (124 aa)) are disordered. The span at 1147-1156 (GVKKPKRKRY) shows a compositional bias: basic residues. Over residues 1176–1189 (LPDRRDLTESDLKS) the composition is skewed to basic and acidic residues. Polar residues predominate over residues 1196-1211 (TPSSSVERDSTILQKS). Over residues 1212 to 1222 (TKSRTHSKPVR) the composition is skewed to basic residues. The residue at position 1318 (serine 1318) is a Phosphoserine. Residues lysine 1328, lysine 1329, and lysine 1398 each participate in a glycyl lysine isopeptide (Lys-Gly) (interchain with G-Cter in SUMO2) cross-link. Serine 1472 bears the Phosphoserine mark. Phosphothreonine is present on threonine 1474. The disordered stretch occupies residues 1591-1627 (LSKSLESTTLQQSALKNKSSGAQPNLKVTPPSSMGSQ). The span at 1595–1613 (LESTTLQQSALKNKSSGAQ) shows a compositional bias: polar residues. 1939–1946 (GPPGTGKS) contacts ATP. Residues 2046 to 2063 (KKDLPSHIQEMLRRKEIL) carry the Bipartite nuclear localization signal motif. Position 2450 is a phosphothreonine (threonine 2450). 3 disordered regions span residues 2450–2472 (THPPATAPEAPRPQGGLPSNRLD), 2486–2506 (HTPSDTVTSKGPERPLLQDRL), and 2569–2624 (SHRS…THHV). Composition is skewed to basic and acidic residues over residues 2496 to 2506 (GPERPLLQDRL) and 2593 to 2608 (KYSDPDAGLSHKREPR). The interval 2632–2646 (RRRLDDSSAKRRQFL) is necessary for nuclear localization.

It belongs to the DNA2/NAM7 helicase family. In terms of assembly, homodimer. Interacts with PER2; the interaction inhibits termination of circadian target genes. Interacts with CHD4, POLR2A, PRKDC and TRIM28. Interacts with UBE2I. Interacts (via N-terminus domain) with EXOSC9 (via C-terminus region); the interaction enhances SETX sumoylation. Interacts with NCL (via N-terminus domain). Interacts with PABPN1, PABPC1 and SF3B1. Interacts with SMN1/SMN2 and POLR2A; SMN1/SMN2 recruits SETX to POLR2A. Post-translationally, ubiquitinated. In terms of processing, sumoylated preferentially with SUMO2 or SUMO3. Expressed in cerebellum, hippocampus, olfactory bulb, Bergmann glial fibers, stellate cells and Purkinje cells. Expressed in the epithelial cells of the lens but not in mature lens fiber cells. Expressed in the retina (highly expressed in inner and outer segments of photoreceptors and outer plexiform layer cells but weakly expressed in the inner plexiform and ganglion cell layers). Expressed in the kidney.

It is found in the nucleus. Its subcellular location is the nucleoplasm. The protein localises to the nucleolus. The protein resides in the cytoplasm. It localises to the chromosome. It is found in the telomere. Its subcellular location is the cell projection. The protein localises to the axon. The protein resides in the growth cone. Its function is as follows. Probable RNA/DNA helicase involved in diverse aspects of RNA metabolism and genomic integrity. Plays a role in transcription regulation by its ability to modulate RNA Polymerase II (Pol II) binding to chromatin and through its interaction with proteins involved in transcription. Contributes to the mRNA splicing efficiency and splice site selection. Required for the resolution of R-loop RNA-DNA hybrid formation at G-rich pause sites located downstream of the poly(A) site, allowing XRN2 recruitment and XRN2-mediated degradation of the downstream cleaved RNA and hence efficient RNA polymerase II (RNAp II) transcription termination. Required for the 3' transcriptional termination of PER1 and CRY2, thus playing an important role in the circadian rhythm regulation. Involved in DNA double-strand breaks damage response generated by oxidative stress. In association with RRP45, targets the RNA exosome complex to sites of transcription-induced DNA damage. Plays a role in the development and maturation of germ cells: essential for male meiosis, acting at the interface of transcription and meiotic recombination, and in the process of gene silencing during meiotic sex chromosome inactivation (MSCI). Plays a role in neurite outgrowth in hippocampal cells through FGF8-activated signaling pathways. Inhibits retinoic acid-induced apoptosis. May be involved in telomeric stability through the regulation of telomere repeat-containing RNA (TERRA) transcription. The polypeptide is Probable helicase senataxin (Mus musculus (Mouse)).